We begin with the raw amino-acid sequence, 185 residues long: GTP cyclohydrolase 1 (185 aa).

Zn(2+) is bound by residues Cys-75, His-78, and Cys-146.

This sequence belongs to the GTP cyclohydrolase I family. As to quaternary structure, toroid-shaped homodecamer, composed of two pentamers of five dimers.

It catalyses the reaction GTP + H2O = 7,8-dihydroneopterin 3'-triphosphate + formate + H(+). It functions in the pathway cofactor biosynthesis; 7,8-dihydroneopterin triphosphate biosynthesis; 7,8-dihydroneopterin triphosphate from GTP: step 1/1. This is GTP cyclohydrolase 1 from Alkalilimnicola ehrlichii (strain ATCC BAA-1101 / DSM 17681 / MLHE-1).